The sequence spans 429 residues: Ribosomal RNA small subunit methyltransferase B (429 aa).

Residues 254–260, Asp277, Asp303, and Asp322 each bind S-adenosyl-L-methionine; that span reads CAAPGGK. Catalysis depends on Cys375, which acts as the Nucleophile. The disordered stretch occupies residues 397-419; that stretch reads ALSETGTPDQPGQQNLPGGEEGD. Residues 400–412 show a composition bias toward polar residues; the sequence is ETGTPDQPGQQNL.

This sequence belongs to the class I-like SAM-binding methyltransferase superfamily. RsmB/NOP family.

The protein resides in the cytoplasm. The catalysed reaction is cytidine(967) in 16S rRNA + S-adenosyl-L-methionine = 5-methylcytidine(967) in 16S rRNA + S-adenosyl-L-homocysteine + H(+). Its function is as follows. Specifically methylates the cytosine at position 967 (m5C967) of 16S rRNA. The polypeptide is Ribosomal RNA small subunit methyltransferase B (Salmonella choleraesuis (strain SC-B67)).